Reading from the N-terminus, the 429-residue chain is 3-phosphoshikimate 1-carboxyvinyltransferase (429 aa).

The 3-phosphoshikimate site is built by K11, S12, and R16. K11 is a phosphoenolpyruvate binding site. G82 and R110 together coordinate phosphoenolpyruvate. 3-phosphoshikimate-binding residues include S155, Q157, D302, and K329. Q157 serves as a coordination point for phosphoenolpyruvate. D302 (proton acceptor) is an active-site residue. Residues R333 and R385 each coordinate phosphoenolpyruvate.

Belongs to the EPSP synthase family. Monomer.

It localises to the cytoplasm. It carries out the reaction 3-phosphoshikimate + phosphoenolpyruvate = 5-O-(1-carboxyvinyl)-3-phosphoshikimate + phosphate. It participates in metabolic intermediate biosynthesis; chorismate biosynthesis; chorismate from D-erythrose 4-phosphate and phosphoenolpyruvate: step 6/7. Its function is as follows. Catalyzes the transfer of the enolpyruvyl moiety of phosphoenolpyruvate (PEP) to the 5-hydroxyl of shikimate-3-phosphate (S3P) to produce enolpyruvyl shikimate-3-phosphate and inorganic phosphate. The polypeptide is 3-phosphoshikimate 1-carboxyvinyltransferase (Helicobacter pylori (strain ATCC 700392 / 26695) (Campylobacter pylori)).